Reading from the N-terminus, the 146-residue chain is MTHSTDLQWLLVRQNSKFLQKRNGIRLSSDPFNNNANWTKRHAGFLNTKAAVVKTKGDRILVTTKDGKAGNKPKSMYKKAVMDAGVEASVVSKAVAAVRPDLASIASRRARKMASTLEHMKKVRAARKERSSKITFQRKAVRPKRH.

The interval 123 to 146 is disordered; that stretch reads VRAARKERSSKITFQRKAVRPKRH.

This sequence belongs to the eukaryotic ribosomal protein eL28 family.

The protein is Large ribosomal subunit protein eL28 of Trypanosoma cruzi.